Here is a 310-residue protein sequence, read N- to C-terminus: Transcription initiation factor IIA subunit 1 (310 aa).

Disordered regions lie at residues 52–78 (AISNQNDPDETTATTTTTQPQSTLSTV), 91–197 (IQLN…NNKD), and 218–261 (VIPQ…DDPD). Composition is skewed to low complexity over residues 62 to 77 (TTATTTTTQPQSTLST) and 122 to 160 (SNGTSPTMNSSNGSNNNNNNNNSNNSSNSSNNNNLPSSL). Acidic residues-rich tracts occupy residues 173–183 (TLDESDNDDDN), 225–236 (LNDDDDLDDEEI), and 246–261 (DSLGSDLDDDDDDDPD).

The protein belongs to the TFIIA subunit 1 family. In terms of assembly, TFIIA is a heterodimer of the large subunit 1 and a small subunit gamma.

It is found in the nucleus. In terms of biological role, TFIIA is a component of the transcription machinery of RNA polymerase II and plays an important role in transcriptional activation. TFIIA in a complex with tbp mediates transcriptional activity. In Dictyostelium discoideum (Social amoeba), this protein is Transcription initiation factor IIA subunit 1 (gtf2a1).